The primary structure comprises 355 residues: Dihydroorotate dehydrogenase (quinone) (355 aa).

Residues 68-72 (AGFDK) and threonine 92 contribute to the FMN site. Lysine 72 contacts substrate. Position 117–121 (117–121 (NRMGF)) interacts with substrate. FMN contacts are provided by asparagine 154 and asparagine 190. Residue asparagine 190 participates in substrate binding. Serine 193 serves as the catalytic Nucleophile. Asparagine 195 provides a ligand contact to substrate. 2 residues coordinate FMN: lysine 232 and threonine 260. 261-262 (NT) is a binding site for substrate. FMN contacts are provided by residues glycine 286, glycine 315, and 336–337 (YS).

Belongs to the dihydroorotate dehydrogenase family. Type 2 subfamily. In terms of assembly, monomer. Requires FMN as cofactor.

It is found in the cell membrane. It catalyses the reaction (S)-dihydroorotate + a quinone = orotate + a quinol. Its pathway is pyrimidine metabolism; UMP biosynthesis via de novo pathway; orotate from (S)-dihydroorotate (quinone route): step 1/1. In terms of biological role, catalyzes the conversion of dihydroorotate to orotate with quinone as electron acceptor. This chain is Dihydroorotate dehydrogenase (quinone), found in Nocardioides sp. (strain ATCC BAA-499 / JS614).